The sequence spans 76 residues: Small proline-rich protein 2F (76 aa).

Tandem repeats lie at residues 21–29 (PKCPEPCSP), 30–38 (SVCPEPCPP), and 39–47 (PKCPEPCPE). Positions 21–47 (PKCPEPCSPSVCPEPCPPPKCPEPCPE) are 3 X 9 AA approximate tandem repeats. The disordered stretch occupies residues 53-76 (SFQQKCPPVQPPPPCQQKCPPKSK).

It belongs to the cornifin (SPRR) family. In terms of tissue distribution, expressed in uterus.

The protein localises to the cytoplasm. In terms of biological role, cross-linked envelope protein of keratinocytes. It is a keratinocyte protein that first appears in the cell cytosol, but ultimately becomes cross-linked to membrane proteins by transglutaminase. All that results in the formation of an insoluble envelope beneath the plasma membrane. The sequence is that of Small proline-rich protein 2F (Sprr2f) from Mus musculus (Mouse).